Reading from the N-terminus, the 569-residue chain is Proline--tRNA ligase (569 aa).

This sequence belongs to the class-II aminoacyl-tRNA synthetase family. ProS type 1 subfamily. Homodimer.

Its subcellular location is the cytoplasm. The enzyme catalyses tRNA(Pro) + L-proline + ATP = L-prolyl-tRNA(Pro) + AMP + diphosphate. Catalyzes the attachment of proline to tRNA(Pro) in a two-step reaction: proline is first activated by ATP to form Pro-AMP and then transferred to the acceptor end of tRNA(Pro). As ProRS can inadvertently accommodate and process non-cognate amino acids such as alanine and cysteine, to avoid such errors it has two additional distinct editing activities against alanine. One activity is designated as 'pretransfer' editing and involves the tRNA(Pro)-independent hydrolysis of activated Ala-AMP. The other activity is designated 'posttransfer' editing and involves deacylation of mischarged Ala-tRNA(Pro). The misacylated Cys-tRNA(Pro) is not edited by ProRS. This is Proline--tRNA ligase from Shewanella woodyi (strain ATCC 51908 / MS32).